A 415-amino-acid chain; its full sequence is ATP-dependent RNA helicase RhlB (415 aa).

The Q motif signature appears at 9-37 (QRFSDLSLHPIVRDTLAKKGFDFCTPIQA). One can recognise a Helicase ATP-binding domain in the interval 40-218 (LPISLNGRDV…FEDMNDPEYI (179 aa)). Residue 53–60 (AQTGTGKT) participates in ATP binding. The DEAD box motif lies at 164 to 167 (DEAD). In terms of domain architecture, Helicase C-terminal spans 241 to 389 (DKMALLLTLM…VSQYETEALL (149 aa)).

This sequence belongs to the DEAD box helicase family. RhlB subfamily. In terms of assembly, component of the RNA degradosome, which is a multiprotein complex involved in RNA processing and mRNA degradation.

Its subcellular location is the cytoplasm. The catalysed reaction is ATP + H2O = ADP + phosphate + H(+). Its function is as follows. DEAD-box RNA helicase involved in RNA degradation. Has RNA-dependent ATPase activity and unwinds double-stranded RNA. This Haemophilus influenzae (strain PittEE) protein is ATP-dependent RNA helicase RhlB.